A 312-amino-acid chain; its full sequence is Putative endo-1,4-beta-xylanase (312 aa).

The GH10 domain maps to 1–301; that stretch reads MKQQYLLDYE…KPCFYSFLQA (301 aa). Glutamate 104 (proton donor) is an active-site residue. Glutamate 216 (nucleophile) is an active-site residue.

The protein belongs to the glycosyl hydrolase 10 (cellulase F) family.

The enzyme catalyses Endohydrolysis of (1-&gt;4)-beta-D-xylosidic linkages in xylans.. The protein operates within glycan degradation; xylan degradation. Could be a xylanase. In Caldicellulosiruptor saccharolyticus (Caldocellum saccharolyticum), this protein is Putative endo-1,4-beta-xylanase.